A 263-amino-acid polypeptide reads, in one-letter code: NH(3)-dependent NAD(+) synthetase (263 aa).

Gly-29–Ser-36 is a binding site for ATP. Mg(2+) is bound at residue Asp-35. Arg-114 is a binding site for deamido-NAD(+). Thr-134 contributes to the ATP binding site. Glu-139 lines the Mg(2+) pocket. Residues Lys-147 and Asp-154 each contribute to the deamido-NAD(+) site. Residues Lys-163 and Ser-185 each contribute to the ATP site. His-244–Lys-245 serves as a coordination point for deamido-NAD(+).

The protein belongs to the NAD synthetase family. In terms of assembly, homodimer.

The catalysed reaction is deamido-NAD(+) + NH4(+) + ATP = AMP + diphosphate + NAD(+) + H(+). The protein operates within cofactor biosynthesis; NAD(+) biosynthesis; NAD(+) from deamido-NAD(+) (ammonia route): step 1/1. In terms of biological role, catalyzes the ATP-dependent amidation of deamido-NAD to form NAD. Uses ammonia as a nitrogen source. This Methanococcoides burtonii (strain DSM 6242 / NBRC 107633 / OCM 468 / ACE-M) protein is NH(3)-dependent NAD(+) synthetase.